Here is a 294-residue protein sequence, read N- to C-terminus: Homeobox-leucine zipper protein ATHB-16 (294 aa).

Positions 1-20 (MKRLSSSDSMCGLISTSTDE) are enriched in polar residues. The segment at 1–31 (MKRLSSSDSMCGLISTSTDEQSPRGYGSNYQ) is disordered. The homeobox DNA-binding region spans 56-115 (LSEKKRRLKVDQVKALEKNFELENKLEPERKTKLAQELGLQPRQVAVWFQNRRARWKTKQ). Residues 116–151 (LEKDYGVLKGQYDSLRHNFDSLRRDNDSLLQEISKI) form a leucine-zipper region. Residues 219 to 238 (SSDSCDSSAVLNDETSSDNG) show a composition bias toward polar residues. The disordered stretch occupies residues 219–241 (SSDSCDSSAVLNDETSSDNGRLT).

It belongs to the HD-ZIP homeobox family. Class I subfamily. As to expression, widely expressed with a lower level in siliques.

It localises to the nucleus. Its function is as follows. Probable transcription factor that may function as a negative regulator of the flowering time response to photoperiod. May act to repress cell expansion during plant development. This Arabidopsis thaliana (Mouse-ear cress) protein is Homeobox-leucine zipper protein ATHB-16 (ATHB-16).